The sequence spans 130 residues: Small ribosomal subunit protein uS8 (130 aa).

It belongs to the universal ribosomal protein uS8 family. In terms of assembly, part of the 30S ribosomal subunit. Contacts proteins S5 and S12.

In terms of biological role, one of the primary rRNA binding proteins, it binds directly to 16S rRNA central domain where it helps coordinate assembly of the platform of the 30S subunit. This chain is Small ribosomal subunit protein uS8, found in Haemophilus ducreyi (strain 35000HP / ATCC 700724).